We begin with the raw amino-acid sequence, 545 residues long: MTLLTQSSTWQALSAHTQNLPHMRELFATDAARFKNMSLSACGLFLDYSKNRATAETLELLFSLAKDSQLEAKIKAMFAGEIINTTEKRAVLHTALRSKASQSIIAEGQDIVLEVQQTLSKMQEFVETVTSGQWKGYTGKAITDIVSIGIGGSFLGPKVVSQALRPYWNQGLNCHFVANVDGTSISEKLKLLDSETTLFIMSSKSFGTQETLTNTLTAKAWFLAKGGLQSDVAKHFVAVTSNVTKATEFGIDANNIFPMWDWVGGRYSLWSAIGLPIALLVGMDNFRALLNGAHQMDEHFASAPLAENMPVIMGLLSLWYGNFFNAQSHVVLTYDHYLRGLPAYFQQLDMESNGKSVTLDGTDVDYSTGPVIWGGEGTNGQHAYHQLIHQGTALIPADFIMPLQSHNPIGVHHDQLASNCFGQTQALMQGRTFEEALAELANSSLTDEEKQLIAKHKVMPGNKPSNTLLMNKLTPETLGALIALYEHRTFVQGAIWDINSFDQWGVELGKNLGNDVLARISAEQDSSALDASSNGLINLYRQGAI.

Catalysis depends on E351, which acts as the Proton donor. Catalysis depends on residues H382 and K510.

Belongs to the GPI family.

It localises to the cytoplasm. It catalyses the reaction alpha-D-glucose 6-phosphate = beta-D-fructose 6-phosphate. It functions in the pathway carbohydrate biosynthesis; gluconeogenesis. Its pathway is carbohydrate degradation; glycolysis; D-glyceraldehyde 3-phosphate and glycerone phosphate from D-glucose: step 2/4. Its function is as follows. Catalyzes the reversible isomerization of glucose-6-phosphate to fructose-6-phosphate. This Shewanella putrefaciens (strain CN-32 / ATCC BAA-453) protein is Glucose-6-phosphate isomerase.